The chain runs to 313 residues: Beta-lactamase BRO-1 (313 aa).

The first 25 residues, 1-25, serve as a signal peptide directing secretion; sequence MQRRHFLQKTLLALPIIFSGNLLTG. Cys-26 is lipidated: N-palmitoyl cysteine. Cys-26 carries the S-diacylglycerol cysteine lipid modification. Ser-90 functions as the Acyl-ester intermediate in the catalytic mechanism. Residue 255–257 coordinates substrate; sequence KTG.

The protein belongs to the class-A beta-lactamase family.

It is found in the cell membrane. It carries out the reaction a beta-lactam + H2O = a substituted beta-amino acid. In Moraxella catarrhalis (Branhamella catarrhalis), this protein is Beta-lactamase BRO-1 (bla).